Reading from the N-terminus, the 393-residue chain is NAD(P)H-quinone oxidoreductase subunit H, chloroplastic (393 aa).

It belongs to the complex I 49 kDa subunit family. NDH is composed of at least 16 different subunits, 5 of which are encoded in the nucleus.

The protein resides in the plastid. The protein localises to the chloroplast thylakoid membrane. The catalysed reaction is a plastoquinone + NADH + (n+1) H(+)(in) = a plastoquinol + NAD(+) + n H(+)(out). The enzyme catalyses a plastoquinone + NADPH + (n+1) H(+)(in) = a plastoquinol + NADP(+) + n H(+)(out). In terms of biological role, NDH shuttles electrons from NAD(P)H:plastoquinone, via FMN and iron-sulfur (Fe-S) centers, to quinones in the photosynthetic chain and possibly in a chloroplast respiratory chain. The immediate electron acceptor for the enzyme in this species is believed to be plastoquinone. Couples the redox reaction to proton translocation, and thus conserves the redox energy in a proton gradient. This is NAD(P)H-quinone oxidoreductase subunit H, chloroplastic from Nandina domestica (Heavenly bamboo).